Reading from the N-terminus, the 321-residue chain is Probable membrane-associated kinase regulator 3 (321 aa).

The span at 297–314 shows a compositional bias: polar residues; sequence KSNVTESELCSSRTSVST. Positions 297–321 are disordered; the sequence is KSNVTESELCSSRTSVSTCGDLDKD.

The protein localises to the cell membrane. In Arabidopsis thaliana (Mouse-ear cress), this protein is Probable membrane-associated kinase regulator 3 (MAKR3).